The following is a 415-amino-acid chain: Transfer protein TraSA (415 aa).

The region spanning 127 to 326 (DGAVHYRDYR…HRVNDETSAN (200 aa)) is the FtsK domain. 145–152 (GATESGKS) contributes to the ATP binding site.

The sequence is that of Transfer protein TraSA (traSA) from Streptomyces ambofaciens.